Consider the following 250-residue polypeptide: Gamma-secretase subunit APH1-like (250 aa).

The next 7 membrane-spanning stretches (helical) occupy residues 5–25 (AGIG…VSVI), 29–49 (PFLI…LIIL), 57–77 (LPLK…SVCF), 116–136 (IALA…CLSL), 157–177 (FLIS…SMVI), 191–211 (IIVP…FASE), and 212–232 (GCVI…VHCG).

The protein belongs to the APH-1 family. As to quaternary structure, probable component of the gamma-secretase complex, a complex composed of a presenilin homodimer, nicastrin, APH1 and PEN2.

The protein resides in the membrane. Its function is as follows. Probable subunit of the gamma-secretase complex, an endoprotease complex that catalyzes the intramembrane cleavage of integral proteins such as Notch receptors. The chain is Gamma-secretase subunit APH1-like from Arabidopsis thaliana (Mouse-ear cress).